Here is a 567-residue protein sequence, read N- to C-terminus: TGF-beta receptor type-2 (567 aa).

The N-terminal stretch at 1–23 (MGRGLLRGLWPLHIVLWTRIAST) is a signal peptide. Topologically, residues 24 to 166 (IPPHVPKSVN…SPDLLLVIIQ (143 aa)) are extracellular. 6 cysteine pairs are disulfide-bonded: C51/C84, C54/C71, C61/C67, C77/C101, C121/C136, and C138/C143. N70 and N94 each carry an N-linked (GlcNAc...) asparagine glycan. A helical transmembrane segment spans residues 167–187 (VTGVSLLPPLGIAIAVIIIFY). The Cytoplasmic portion of the chain corresponds to 188 to 567 (CYRVHRQQKL…PEDGSLNTTK (380 aa)). The Protein kinase domain occupies 244–546 (IELDTLVGKG…RFSELEHPER (303 aa)). ATP-binding positions include 250–258 (VGKGRFAEV) and K277. D379 serves as the catalytic Proton acceptor. Phosphoserine is present on residues S409, S548, and S553. Residues 545-567 (ERLSGRSCSQEKIPEDGSLNTTK) are disordered.

It belongs to the protein kinase superfamily. TKL Ser/Thr protein kinase family. TGFB receptor subfamily. In terms of assembly, homodimer. Heterohexamer; TGFB1, TGFB2 and TGFB3 homodimeric ligands assemble a functional receptor composed of two TGFBR1 and TGFBR2 heterodimers to form a ligand-receptor heterohexamer. The respective affinity of TGFRB1 and TGFRB2 for the ligands may modulate the kinetics of assembly of the receptor and may explain the different biological activities of TGFB1, TGFB2 and TGFB3. Component of a complex composed of TSC22D1 (via N-terminus), TGFBR1 and TGFBR2; the interaction between TSC22D1 and TGFBR1 is inhibited by SMAD7 and promoted by TGFB1. Interacts with DAXX. Interacts with DYNLT4. Interacts with ZFYVE9; ZFYVE9 recruits SMAD2 and SMAD3 to the TGF-beta receptor. Interacts with and is activated by SCUBE3; this interaction does not affect TGFB1-binding to TGFBR2. Interacts with VPS39; this interaction is independent of the receptor kinase activity and of the presence of TGF-beta. Interacts with CLU. Requires Mg(2+) as cofactor. Mn(2+) serves as cofactor. Phosphorylated on a Ser/Thr residue in the cytoplasmic domain. Widely expressed in adult. Expressed primarily in mesenchyme and epidermis of the midgestational fetus.

The protein resides in the cell membrane. Its subcellular location is the membrane raft. The enzyme catalyses L-threonyl-[receptor-protein] + ATP = O-phospho-L-threonyl-[receptor-protein] + ADP + H(+). It carries out the reaction L-seryl-[receptor-protein] + ATP = O-phospho-L-seryl-[receptor-protein] + ADP + H(+). Transmembrane serine/threonine kinase forming with the TGF-beta type I serine/threonine kinase receptor, TGFBR1, the non-promiscuous receptor for the TGF-beta cytokines TGFB1, TGFB2 and TGFB3. Transduces the TGFB1, TGFB2 and TGFB3 signal from the cell surface to the cytoplasm and is thus regulating a plethora of physiological and pathological processes including cell cycle arrest in epithelial and hematopoietic cells, control of mesenchymal cell proliferation and differentiation, wound healing, extracellular matrix production, immunosuppression and carcinogenesis. The formation of the receptor complex composed of 2 TGFBR1 and 2 TGFBR2 molecules symmetrically bound to the cytokine dimer results in the phosphorylation and the activation of TGFRB1 by the constitutively active TGFBR2. Activated TGFBR1 phosphorylates SMAD2 which dissociates from the receptor and interacts with SMAD4. The SMAD2-SMAD4 complex is subsequently translocated to the nucleus where it modulates the transcription of the TGF-beta-regulated genes. This constitutes the canonical SMAD-dependent TGF-beta signaling cascade. Also involved in non-canonical, SMAD-independent TGF-beta signaling pathways. In terms of biological role, has transforming growth factor beta-activated receptor activity. The polypeptide is TGF-beta receptor type-2 (Tgfbr2) (Mus musculus (Mouse)).